The chain runs to 454 residues: UDP-N-acetylmuramoylalanine--D-glutamate ligase (454 aa).

115-121 (GTNGKTT) contacts ATP.

This sequence belongs to the MurCDEF family.

It localises to the cytoplasm. The catalysed reaction is UDP-N-acetyl-alpha-D-muramoyl-L-alanine + D-glutamate + ATP = UDP-N-acetyl-alpha-D-muramoyl-L-alanyl-D-glutamate + ADP + phosphate + H(+). It participates in cell wall biogenesis; peptidoglycan biosynthesis. Its function is as follows. Cell wall formation. Catalyzes the addition of glutamate to the nucleotide precursor UDP-N-acetylmuramoyl-L-alanine (UMA). This is UDP-N-acetylmuramoylalanine--D-glutamate ligase from Thermoanaerobacter sp. (strain X514).